The sequence spans 1013 residues: Zinc finger and BTB domain-containing protein 4 (1013 aa).

One can recognise a BTB domain in the interval 30 to 152 (CDVTLIAGDT…IYSARLALPG (123 aa)). Lys-40 is covalently cross-linked (Glycyl lysine isopeptide (Lys-Gly) (interchain with G-Cter in SUMO2)). A compositionally biased stretch (low complexity) spans 67–110 (LPPATGGAAPNPATTTAASSSSSSSSSSSSSSSSASSSSSSSSS). Disordered regions lie at residues 67–124 (LPPA…SPPR) and 183–221 (DAWVPPTPAPMATSQPEEDSFGPGPRPAGEWEGDRAEAQ). Positions 111–121 (SPPPASPPASS) are enriched in pro residues. Residues 186 to 348 (VPPTPAPMAT…CRYCEKVFAL (163 aa)) are interaction with CBFA2T3. The C2H2-type 1; atypical zinc finger occupies 234 to 256 (LPCPQCGKSFIHPKRLQTHEAQC). The tract at residues 257–281 (RRGASTRGSTGLGAGGAGPGGPAGV) is disordered. Over residues 266 to 279 (TGLGAGGAGPGGPA) the composition is skewed to gly residues. 3 consecutive C2H2-type zinc fingers follow at residues 309-331 (YVCAACERSYVTLSSLKRHSNVH), 337-359 (YPCRYCEKVFALAEYRTKHEVWH), and 365-388 (YQCIFCWETFVTYYNLKTHQRAFH). The residue at position 391 (Ser-391) is a Phosphoserine. Disordered regions lie at residues 428 to 765 (KTYS…STRF), 783 to 852 (HGQR…DPII), 883 to 904 (GREPGGGRGKSGSEGPVGAGEG), and 972 to 1013 (VNPQ…GDVG). The segment covering 453–470 (ASPPPGPPPAPEPGPPPS) has biased composition (pro residues). 2 stretches are compositionally biased toward low complexity: residues 496–506 (TASTGGSQAAS) and 531–554 (ATPTSPATAVSPATAAGPAMATTT). Lys-573 is covalently cross-linked (Glycyl lysine isopeptide (Lys-Gly) (interchain with G-Cter in SUMO2)). Positions 576-590 (GGIGGGGGPPTGAGR) are enriched in gly residues. The span at 608-625 (IGEEAIVKRRISETDLRP) shows a compositional bias: basic and acidic residues. Residue Lys-615 forms a Glycyl lysine isopeptide (Lys-Gly) (interchain with G-Cter in SUMO2) linkage. Residues 627–663 (ELSGEEMEESEEDEEEEDEEEEEEDEEESKAGGEDQL) adopt a coiled-coil conformation. Acidic residues predominate over residues 629–654 (SGEEMEESEEDEEEEDEEEEEEDEEE). Positions 678–689 (AAGGASVGGSGL) are enriched in gly residues. C2H2-type zinc fingers lie at residues 726 to 748 (HRCGDCAQTFTTLRKLRKHQEAH) and 765 to 787 (FTCPHCAKVCKTAAALSRHGQRH). A phosphothreonine; by HIPK2 mark is found at Thr-795 and Thr-797. Positions 836-846 (TAAEEASETAS) are enriched in low complexity. Over residues 883 to 902 (GREPGGGRGKSGSEGPVGAG) the composition is skewed to gly residues. The span at 976 to 995 (AAPPAPPTPPPPTLPPPIPP) shows a compositional bias: pro residues. Residue Thr-983 is modified to Phosphothreonine; by HIPK2. Basic and acidic residues predominate over residues 997–1013 (GEGERAGVERTQKGDVG).

As to quaternary structure, interacts with HIPK2. Interacts with CBFA2T3. Interacts with ZBTB38. Phosphorylated by HIPK2. This phosphorylation reduces stability and triggers ZBTB4 protein degradation in response to DNA damage.

Its subcellular location is the nucleus. It is found in the chromosome. Its function is as follows. Transcriptional repressor with bimodal DNA-binding specificity. Represses transcription in a methyl-CpG-dependent manner. Binds with a higher affinity to methylated CpG dinucleotides in the consensus sequence 5'-CGCG-3' but can also bind to the non-methylated consensus sequence 5'-CTGCNA-3' also known as the consensus kaiso binding site (KBS). Can also bind specifically to a single methyl-CpG pair and can bind hemimethylated DNA but with a lower affinity compared to methylated DNA. Plays a role in postnatal myogenesis, may be involved in the regulation of satellite cells self-renewal. The protein is Zinc finger and BTB domain-containing protein 4 (ZBTB4) of Homo sapiens (Human).